Here is a 361-residue protein sequence, read N- to C-terminus: DNA replication and repair protein RecF (361 aa).

Position 30–37 (30–37) interacts with ATP; the sequence is GDNAQGKT.

Belongs to the RecF family.

The protein resides in the cytoplasm. The RecF protein is involved in DNA metabolism; it is required for DNA replication and normal SOS inducibility. RecF binds preferentially to single-stranded, linear DNA. It also seems to bind ATP. This chain is DNA replication and repair protein RecF, found in Clostridium novyi (strain NT).